Reading from the N-terminus, the 392-residue chain is Adenine nucleotide transporter BT1, chloroplastic/mitochondrial (392 aa).

Solcar repeat units lie at residues 108–191 (NPSL…VNKK), 202–286 (IPIP…LRKA), and 296–384 (IGNI…CKKI). The next 6 helical transmembrane spans lie at 113–133 (RLLSGAVAGAVSRTVVAPLET), 168–188 (LVNVIRVAPARAVELFVFETV), 204–224 (IPASLLAGACAGVSQTLLTYP), 263–283 (APSLIGVVPYAATNYFAYDSL), 302–322 (LLIGSLAGALSSTATFPLEVA), and 359–379 (GLGPSCLKLVPAAGISFMCYE).

The protein belongs to the mitochondrial carrier (TC 2.A.29) family. In terms of tissue distribution, expressed in root tips, the central cylinder of young roots, and maturating and germinating pollen.

Its subcellular location is the plastid. It is found in the chloroplast inner membrane. It localises to the mitochondrion inner membrane. With respect to regulation, inhibited by pyridoxal 5-phosphate but not mersalyl. Its function is as follows. Probable mitochondrial adenylate carrier that catalyzes the transport of ATP, ADP and AMP, but not ADP-glucose. Recombinant BT1 shows a unidirectional mode of transport in intact E.coli cells. May function as a plastidial nucleotide uniport carrier required to export newly synthesized adenylates into the cytosol. May be involved in abiotic stress response. The sequence is that of Adenine nucleotide transporter BT1, chloroplastic/mitochondrial (BT1) from Arabidopsis thaliana (Mouse-ear cress).